A 263-amino-acid chain; its full sequence is MTVSPSSQTGRGEIGRDELVRWLGEYLRIGAYPDPSLNGLQIQGTDKIRRIAASVDTSLQTLQAAAESGADLLLVHHGLFWGRPLAITGPHYERVRTAIQADLNLYAAHIPLDAHPEVGNNAMIARALSLTDLQPFGDWQGHKIGVAGTLPRELGLQDFADRIQKLTGEICLVHGGGSPNIHRVGVTSGSGAGAIAEAAAMGLDTLLTGEPEHKYFHDSFEYGVNVIFAGHYETEVFGVRALAARIEDEFGIPWQFLNFPTGL.

The a divalent metal cation site is built by His76, His77, Asp113, His231, and Glu235.

This sequence belongs to the GTP cyclohydrolase I type 2/NIF3 family. As to quaternary structure, homohexamer.

This chain is GTP cyclohydrolase 1 type 2 homolog, found in Deinococcus radiodurans (strain ATCC 13939 / DSM 20539 / JCM 16871 / CCUG 27074 / LMG 4051 / NBRC 15346 / NCIMB 9279 / VKM B-1422 / R1).